The sequence spans 226 residues: Guanylate kinase (226 aa).

Residues 13–193 enclose the Guanylate kinase-like domain; sequence GLLLVLSAPS…ALAQLQAIVR (181 aa). 20–27 provides a ligand contact to ATP; sequence APSGAGKT.

This sequence belongs to the guanylate kinase family.

It localises to the cytoplasm. The enzyme catalyses GMP + ATP = GDP + ADP. In terms of biological role, essential for recycling GMP and indirectly, cGMP. This Anaeromyxobacter dehalogenans (strain 2CP-C) protein is Guanylate kinase.